We begin with the raw amino-acid sequence, 283 residues long: Urease accessory protein UreD (283 aa).

Residues 1–21 form a disordered region; it reads MTQTQPVGTLRLTIDDQGPQG.

Belongs to the UreD family. As to quaternary structure, ureD, UreF and UreG form a complex that acts as a GTP-hydrolysis-dependent molecular chaperone, activating the urease apoprotein by helping to assemble the nickel containing metallocenter of UreC. The UreE protein probably delivers the nickel.

The protein resides in the cytoplasm. Its function is as follows. Probably acts in the maturation of urease via the functional incorporation of the urease nickel metallocenter. Required for urease expression. The sequence is that of Urease accessory protein UreD from Corynebacterium glutamicum (strain ATCC 13032 / DSM 20300 / JCM 1318 / BCRC 11384 / CCUG 27702 / LMG 3730 / NBRC 12168 / NCIMB 10025 / NRRL B-2784 / 534).